A 568-amino-acid polypeptide reads, in one-letter code: Urease subunit alpha (568 aa).

One can recognise a Urease domain in the interval 130 to 568 (GGIDTHIHFI…LPMAQRYFLF (439 aa)). Residues H135, H137, and K218 each coordinate Ni(2+). Position 218 is an N6-carboxylysine (K218). Substrate is bound at residue H220. H247 and H273 together coordinate Ni(2+). H321 functions as the Proton donor in the catalytic mechanism. D361 contributes to the Ni(2+) binding site.

Belongs to the metallo-dependent hydrolases superfamily. Urease alpha subunit family. In terms of assembly, heterotrimer of UreA (gamma), UreB (beta) and UreC (alpha) subunits. Three heterotrimers associate to form the active enzyme. The cofactor is Ni cation. Carboxylation allows a single lysine to coordinate two nickel ions.

Its subcellular location is the cytoplasm. The enzyme catalyses urea + 2 H2O + H(+) = hydrogencarbonate + 2 NH4(+). It participates in nitrogen metabolism; urea degradation; CO(2) and NH(3) from urea (urease route): step 1/1. The chain is Urease subunit alpha from Burkholderia pseudomallei (strain K96243).